We begin with the raw amino-acid sequence, 62 residues long: Photosystem II reaction center protein Z (62 aa).

The next 2 membrane-spanning stretches (helical) occupy residues 8-28 (AVFA…VVFA) and 41-61 (FSGT…NSLI).

It belongs to the PsbZ family. PSII is composed of 1 copy each of membrane proteins PsbA, PsbB, PsbC, PsbD, PsbE, PsbF, PsbH, PsbI, PsbJ, PsbK, PsbL, PsbM, PsbT, PsbY, PsbZ, Psb30/Ycf12, at least 3 peripheral proteins of the oxygen-evolving complex and a large number of cofactors. It forms dimeric complexes.

It localises to the plastid. Its subcellular location is the chloroplast thylakoid membrane. Its function is as follows. May control the interaction of photosystem II (PSII) cores with the light-harvesting antenna, regulates electron flow through the 2 photosystem reaction centers. PSII is a light-driven water plastoquinone oxidoreductase, using light energy to abstract electrons from H(2)O, generating a proton gradient subsequently used for ATP formation. The chain is Photosystem II reaction center protein Z from Gossypium barbadense (Sea Island cotton).